A 2312-amino-acid chain; its full sequence is MGNQRNRVNLNPFRFWVFELREILREIKNYRYLGPFNSVGSFIHIFVHQERFLKLLDPRIWSVLRSQGSTGVVLFLVAVLIYRINNRNMIERKNIYLTGLLPIPTNFAGPRNETLEESFLSSNINRLIVSLLHLPKGKRLSESCFLDPKESTRVLPITKWRNWIGKRRDSSQLKGSSDQSRDHFDSIGTEDSEYHTLINQREIQQRKERSSLLDPSFLQTERTEIESDRFSKGLSGSSSKSRLFTEGEKEMNNHLPPEEIEEFLGNPTRSILSFFSDEWSELHLGSNPTERSTVDQKLLKKEQEVSFAPFRRSETKEIVNLFKTMAYLQKTVSIHPISSDPGCDMVPKDELDSEERFQEMADLFTLSITEPDLVYHKGFAFSIDSSVLDQKQFLAEARDESKKKSLLVLPPVFYQENESFYRRIRKRGVQISCGNDLEDPKPKIVVFASNNIVEAVNQYRWIRNLIQIQYSTHGYIRNVLNRFFLMNRSDRNFEYGIQRDQIGNDTLNHRTFMKYTINQHLSNLKKSQKKGSDPLILISRTERSVNRDPNAYRYKWSKGSKNFQEHLEHFVSEQKSRFQVVFDRYRSIRNRYRSRINQYSSDRSEVSDKKDNRYRSRINQYSSDRSEVSDKKNLAKFRSFVFSKLLLFLSNSLPFFFVSFGNTPPIQRSEIRVSELKGPNDRLCNQFLESIGLQLVYLKKLKPFLLDDHETSQKSKLLFNKKPEGMIDSFHTRNNRGKSLDSYFSMISHDQDNWLNPVKPFHRSSLISSFYKANRLRFLNNPHDFGFFCNKRFPFYVDIKNLDFTYGQFLNILFIRNTKFSLCGDKKKHAFLERDTISSIESQVSNLFKDFPQSGDERYNFYKYFHLAMRSDPLVRRAIYSIADISGTPLTEGQRVNFERTYCQPLSDMNLSDSEGKNLYQYLNFNSNMGLIYSEKCFSSEKRKKKKPEKRKEKKPEKRKEKKPEKRKEKKPEKRKEKKPEKRKEKKPEKRKEKKPEKRKEKKPEKRKEKKQSLYLKQWVEKVQMDRALQGERVSLILSNWNLFKTYVMPFSLTSTGYNLLKLMFLDTLGSYVMPLLRSSPKFVSICYAISDPCGISWRILQKKWCLLQWNWISAISNKCFHKLLLSEESIHRNNESPSMTDLRWPNLGEFLYSILFLLLVAGHLVFSHLLFFSQAFSELQRDFARAQSLMIPSYIVELRELLDMYPAPRSFKKLFLAAREKLVNYLRWGGGRKSFLIHLFELLNITPNPIDRIAFLKNTRHLSHTSKELYSLITELGDFSSLCSGQRYRYDQIIENVNGPCCLIDDKIESWISNCDAIEDKEREFLVPFCNFTRETRIDQILLSLTHSDHLSNNDSASQMSEEPGAFYLRHLVDIHKKGLMNYECNTSCLAERRIFLAHYQTITYSPCGDNRSHFPSHGKTFSLRLPLHPSRATLVIGSIGSGRSYLVKSLATNSYVPLITVVLNKFLKNWTPQGFDIHESGVYDEYGDDAEEANDYGASFFDFLDNDSDDYEDRDSDDYEPGASDDYEPGDMEDFVDSEMTEWLTKTNVPLVYQLLDDEIDEFYITLQFELAKAMSPCILWIPNIHDLDAKESDYLSLGLLVNHLSRDCGRRSTKNEILVIASTHIPQKVDPSLIGPDGLSTCIKTRRLLVPQQQQCLFTLSYTRGFHLENKMFHTHTNEFESTILGPSVPDLVALTNEALSISITQKKSIIDTTTIRYALHRKTWDLEADRNLSPAKEHGTLFYQVGRAFAHTVLLRNCPIDPISIYIKKNLCEAGDSSLYKWYFELGTSMKKLTILLYLLTCSAGSIAQDLLSPPGPDEQNLITSYGLVENDSDLVHGLSDIVHGLLELEGALVGSSPTEEEVEGTEEEVEGTEEEVEGTEEEVEGTEEEVEGTEEEVEGTEEEVEGTEDEEVEGTEEEVEGTEDEEVEGTEEEVEGTEEEVEGTEDEEGEGTEDEEVEGTEKDSSQFDNDRVTLLLRPKPRNPLDIQRLIYQHQKYESELEEDDDDDEDVFAPQKMLEDLFSELVWSPRIWHPWDFILDCEAEIPAEEIPEEEDPLPEEALETEVAVWGEEEEGEADDEEDERLEAQQEDELLEEEDEELKEEEDELHEEEEEEEEEEEEEDELHEEEEEEEEEEEDELQENDSEFFRSETQQPQARDGFSEEEGCFRISQFMWVPGDPLSFLYKDTPFVEVLSYPEEATEISKELLRLLNPKTKRDAPKRARQRWWTKKKQDKHYELVLDRQRWLITKSSLSKSNGFFRSNTPSESYQYLSNLFLSNRRLLDQMTKTFFRKKWLFPDEMKIGFMEQ.

Disordered regions lie at residues 170-191 (SSQL…GTED), 223-253 (TEIE…EMNN), and 942-1009 (KRKK…KRKE). Over residues 232 to 242 (KGLSGSSSKSR) the composition is skewed to low complexity. 2 stretches are compositionally biased toward basic and acidic residues: residues 243 to 252 (LFTEGEKEMN) and 950 to 1007 (KRKE…PEKR). 1439–1446 (GSIGSGRS) contributes to the ATP binding site. 3 disordered regions span residues 1513–1532 (YEDR…YEPG), 1857–1983 (LVGS…LLRP), and 2050–2166 (PAEE…DGFS). Acidic residues predominate over residues 1863 to 1963 (TEEEVEGTEE…GEGTEDEEVE (101 aa)). Positions 1964 to 1976 (GTEKDSSQFDNDR) are enriched in basic and acidic residues. Composition is skewed to acidic residues over residues 2050 to 2067 (PAEE…EALE) and 2074 to 2149 (GEEE…ENDS).

It belongs to the Ycf2 family.

The protein resides in the plastid. It localises to the chloroplast stroma. Its function is as follows. Probable ATPase of unknown function. Its presence in a non-photosynthetic plant (Epifagus virginiana) and experiments in tobacco indicate that it has an essential function which is probably not related to photosynthesis. In Oenothera parviflora (Small-flowered evening primrose), this protein is Protein Ycf2.